The chain runs to 694 residues: DNA polymerase eta (694 aa).

Residues 9–258 (VALVDMDCFF…MPIRKIRSLG (250 aa)) enclose the UmuC domain. The Mg(2+) site is built by aspartate 13 and methionine 14. Positions 13 and 14 each coordinate Mn(2+). An a 2'-deoxyribonucleoside 5'-triphosphate-binding site is contributed by arginine 61. Aspartate 115 and glutamate 116 together coordinate Mg(2+). Aspartate 115 and glutamate 116 together coordinate Mn(2+). Glutamate 116 is an active-site residue. The segment at 565–598 (DSGPDDGAVKPVSSKAVSTEMNVAGDSPNVLDSP) is disordered. The UBZ3-type zinc-finger motif lies at 609–643 (ATEDQVLCEKCDSLVPVWDMPEHTDYHFALELQKS). Zn(2+)-binding residues include cysteine 616, cysteine 619, histidine 631, and histidine 635. Residues 651 to 694 (KPQAIPAVSPQGKRNPKSPSASSSKRLRPHGMQTLESFFKPLTH) are disordered. Glycyl lysine isopeptide (Lys-Gly) (interchain with G-Cter in ubiquitin) cross-links involve residues lysine 663, lysine 667, and lysine 675. Residues 682–689 (MQTLESFF) carry the PIP-box motif. Lysine 690 is covalently cross-linked (Glycyl lysine isopeptide (Lys-Gly) (interchain with G-Cter in ubiquitin)).

It belongs to the DNA polymerase type-Y family. Interacts with REV1. Interacts with monoubiquitinated PCNA, but not unmodified PCNA. Interacts with POLI; this interaction targets POLI to the replication machinery. Interacts with PALB2 and BRCA2; the interactions are direct and are required to sustain the recruitment of POLH at blocked replication forks and to stimulate POLH-dependent DNA synthesis on D loop substrates. Interacts (via C-terminus) with TRAIP. Interacts with ubiquitin. Interacts with POLDIP2. The cofactor is Mg(2+). Mn(2+) serves as cofactor. Monoubiquitinated by RCHY1/PIRH2. Ubiquitination depends on integrity of the UBZ3-type zinc finger domain and is enhanced by TRAIP. Ubiquitination inhibits the ability of PolH to interact with PCNA and to bypass UV-induced lesions. Ubiquitous.

It localises to the nucleus. It catalyses the reaction DNA(n) + a 2'-deoxyribonucleoside 5'-triphosphate = DNA(n+1) + diphosphate. With respect to regulation, the enzyme in complex with the DNA substrate binds a third divalent metal cation. The binding of this third divalent cation, which is coordinated by water molecules and two oxygen atoms from DNA and dNTP, is essential for catalyzing the DNA synthesis. Its function is as follows. DNA polymerase specifically involved in the DNA repair by translesion synthesis (TLS). Due to low processivity on both damaged and normal DNA, cooperates with the heterotetrameric (REV3L, REV7, POLD2 and POLD3) POLZ complex for complete bypass of DNA lesions. Inserts one or 2 nucleotide(s) opposite the lesion, the primer is further extended by the tetrameric POLZ complex. In the case of 1,2-intrastrand d(GpG)-cisplatin cross-link, inserts dCTP opposite the 3' guanine. Particularly important for the repair of UV-induced pyrimidine dimers. Although inserts the correct base, may cause base transitions and transversions depending upon the context. May play a role in hypermutation at immunoglobulin genes. Forms a Schiff base with 5'-deoxyribose phosphate at abasic sites, but does not have any lyase activity, preventing the release of the 5'-deoxyribose phosphate (5'-dRP) residue. This covalent trapping of the enzyme by the 5'-dRP residue inhibits its DNA synthetic activity during base excision repair, thereby avoiding high incidence of mutagenesis. Targets POLI to replication foci. This is DNA polymerase eta (Polh) from Mus musculus (Mouse).